The following is a 198-amino-acid chain: Thymidine kinase (198 aa).

Residues 16-23 (GGMYSGKS) and 89-92 (EEGQ) each bind ATP. The active-site Proton acceptor is the E90. The Zn(2+) site is built by C146, C149, C184, and C187.

The protein belongs to the thymidine kinase family. As to quaternary structure, homotetramer.

The protein localises to the cytoplasm. It carries out the reaction thymidine + ATP = dTMP + ADP + H(+). The sequence is that of Thymidine kinase from Dictyoglomus thermophilum (strain ATCC 35947 / DSM 3960 / H-6-12).